Here is a 403-residue protein sequence, read N- to C-terminus: Phosphoglycerate kinase (403 aa).

Substrate-binding positions include 21-23 (DFN), Arg36, 59-62 (HVGR), Arg119, and Arg154. ATP-binding positions include Lys207, Gly299, Glu330, and 357 to 360 (GGDA).

Belongs to the phosphoglycerate kinase family. In terms of assembly, monomer.

The protein localises to the cytoplasm. The catalysed reaction is (2R)-3-phosphoglycerate + ATP = (2R)-3-phospho-glyceroyl phosphate + ADP. Its pathway is carbohydrate degradation; glycolysis; pyruvate from D-glyceraldehyde 3-phosphate: step 2/5. The polypeptide is Phosphoglycerate kinase (pgk) (Chlamydia trachomatis serovar D (strain ATCC VR-885 / DSM 19411 / UW-3/Cx)).